The sequence spans 975 residues: Glycine dehydrogenase (decarboxylating) (975 aa).

The residue at position 723 (Lys-723) is an N6-(pyridoxal phosphate)lysine.

Belongs to the GcvP family. As to quaternary structure, the glycine cleavage system is composed of four proteins: P, T, L and H. Pyridoxal 5'-phosphate is required as a cofactor.

It carries out the reaction N(6)-[(R)-lipoyl]-L-lysyl-[glycine-cleavage complex H protein] + glycine + H(+) = N(6)-[(R)-S(8)-aminomethyldihydrolipoyl]-L-lysyl-[glycine-cleavage complex H protein] + CO2. The glycine cleavage system catalyzes the degradation of glycine. The P protein binds the alpha-amino group of glycine through its pyridoxal phosphate cofactor; CO(2) is released and the remaining methylamine moiety is then transferred to the lipoamide cofactor of the H protein. The chain is Glycine dehydrogenase (decarboxylating) from Burkholderia lata (strain ATCC 17760 / DSM 23089 / LMG 22485 / NCIMB 9086 / R18194 / 383).